A 217-amino-acid polypeptide reads, in one-letter code: Adenylate kinase (217 aa).

ATP is bound at residue 10 to 15 (GIGKGT). Residues 30–59 (ATGDIFRKNFKENTELGILIKKIIAQGLLV) are NMP. AMP is bound by residues threonine 31, arginine 36, 57–59 (LLV), 85–88 (GFPR), and glutamine 92. Residues 126-163 (GRRICPECGKVYHIENIPPKTPGICDKDQKTLIQREDD) are LID. ATP is bound at residue arginine 127. Zn(2+) is bound by residues cysteine 130 and cysteine 133. 136 to 137 (VY) contributes to the ATP binding site. Residues cysteine 150 and aspartate 153 each contribute to the Zn(2+) site. Positions 160 and 171 each coordinate AMP. An ATP-binding site is contributed by glutamine 199.

The protein belongs to the adenylate kinase family. In terms of assembly, monomer.

The protein resides in the cytoplasm. The catalysed reaction is AMP + ATP = 2 ADP. It functions in the pathway purine metabolism; AMP biosynthesis via salvage pathway; AMP from ADP: step 1/1. Its function is as follows. Catalyzes the reversible transfer of the terminal phosphate group between ATP and AMP. Plays an important role in cellular energy homeostasis and in adenine nucleotide metabolism. This Onion yellows phytoplasma (strain OY-M) protein is Adenylate kinase.